We begin with the raw amino-acid sequence, 447 residues long: MHIPTAAPAPAKPLPIYRQLYFQVIVAIVLGAILGHYEPLVGEKMKPLGDAFINLVKMIIAPVIFLTIVTGIASMTHLRTVGRVFAKAMAYFLFFSTLALIVGMIVAHVVQPGAGMNINPAELDQTAVHSYVEKSHDLTLVGFLMDIIPKTLVSAFVDGNILQVLFIAVLFGIALASVGEKGKPILNFLEALVAPVFKLVHILMKAAPIGAFGAIAFTIGKYGVGSLVNLAWLVGSFYLTAFLFVAVILGVVCRLCGFSVFKLARYLKAELLLVLGTSSSESALPSLMEKMERAGCSKSVVGLVVPTGYSFNLDGTNIYMTLAALFIAQATNTELTLGHQIALLLVAMLSSKGAAGVTGAGFITLAATLAVVPEVPVAGMALILGVDRFMSECRSLTNFIGNAVATVVVSRWEGALDRNRLQLALDGRESELPPPIDVVPEALPAKG.

8 helical membrane-spanning segments follow: residues 22–42 (FQVIVAIVLGAILGHYEPLVG), 52–72 (FINLVKMIIAPVIFLTIVTGI), 90–110 (AYFLFFSTLALIVGMIVAHVV), 159–179 (GNILQVLFIAVLFGIALASVG), 199–219 (LVHILMKAAPIGAFGAIAFTI), 232–252 (WLVGSFYLTAFLFVAVILGVV), 325–347 (LFIAQATNTELTLGHQIALLLVA), and 366–386 (AATLAVVPEVPVAGMALILGV).

It belongs to the dicarboxylate/amino acid:cation symporter (DAACS) (TC 2.A.23) family.

It localises to the cell inner membrane. Its function is as follows. Responsible for the transport of dicarboxylates such as succinate, fumarate, and malate from the periplasm across the membrane. This chain is C4-dicarboxylate transport protein, found in Stenotrophomonas maltophilia (strain R551-3).